A 337-amino-acid polypeptide reads, in one-letter code: 4-hydroxythreonine-4-phosphate dehydrogenase (337 aa).

Residues H139 and T140 each coordinate substrate. Residues H173, H218, and H273 each coordinate a divalent metal cation. Substrate is bound by residues K281, N290, and R299.

Belongs to the PdxA family. In terms of assembly, homodimer. Zn(2+) serves as cofactor. It depends on Mg(2+) as a cofactor. Requires Co(2+) as cofactor.

The protein localises to the cytoplasm. The catalysed reaction is 4-(phosphooxy)-L-threonine + NAD(+) = 3-amino-2-oxopropyl phosphate + CO2 + NADH. It participates in cofactor biosynthesis; pyridoxine 5'-phosphate biosynthesis; pyridoxine 5'-phosphate from D-erythrose 4-phosphate: step 4/5. Catalyzes the NAD(P)-dependent oxidation of 4-(phosphooxy)-L-threonine (HTP) into 2-amino-3-oxo-4-(phosphooxy)butyric acid which spontaneously decarboxylates to form 3-amino-2-oxopropyl phosphate (AHAP). The protein is 4-hydroxythreonine-4-phosphate dehydrogenase of Rhodopseudomonas palustris (strain ATCC BAA-98 / CGA009).